A 416-amino-acid polypeptide reads, in one-letter code: 4-hydroxy-3-methylbut-2-en-1-yl diphosphate synthase (flavodoxin) (416 aa).

[4Fe-4S] cluster-binding residues include C304, C307, C350, and E357.

It belongs to the IspG family. The cofactor is [4Fe-4S] cluster.

The catalysed reaction is (2E)-4-hydroxy-3-methylbut-2-enyl diphosphate + oxidized [flavodoxin] + H2O + 2 H(+) = 2-C-methyl-D-erythritol 2,4-cyclic diphosphate + reduced [flavodoxin]. Its pathway is isoprenoid biosynthesis; isopentenyl diphosphate biosynthesis via DXP pathway; isopentenyl diphosphate from 1-deoxy-D-xylulose 5-phosphate: step 5/6. Its function is as follows. Converts 2C-methyl-D-erythritol 2,4-cyclodiphosphate (ME-2,4cPP) into 1-hydroxy-2-methyl-2-(E)-butenyl 4-diphosphate. The chain is 4-hydroxy-3-methylbut-2-en-1-yl diphosphate synthase (flavodoxin) from Rhizobium etli (strain ATCC 51251 / DSM 11541 / JCM 21823 / NBRC 15573 / CFN 42).